The chain runs to 335 residues: Proline racemase (335 aa).

Cys-91 (proton acceptor) is an active-site residue. Residue Cys-256 is the Proton donor of the active site.

This sequence belongs to the proline racemase family.

It catalyses the reaction L-proline = D-proline. Inhibited by pyrrole-2-carboxylate in vitro. Functionally, catalyzes the reversible interconversion of L- and D-proline. Likely functions as the proline racemase necessary for D-proline generation in order to discriminate it from the L-proline used for protein synthesis. The sequence is that of Proline racemase from Acetoanaerobium sticklandii (strain ATCC 12662 / DSM 519 / JCM 1433 / CCUG 9281 / NCIMB 10654 / HF) (Clostridium sticklandii).